The chain runs to 279 residues: Large ribosomal subunit protein uL2 (279 aa).

The disordered stretch occupies residues 223–279; that stretch reads MAMNPVDHPMGGGEGKSKSGGGRKHPKSPWGQLAKGLKTRNKKKASTKLIVRGRKAK. The segment covering 232 to 242 has biased composition (gly residues); that stretch reads MGGGEGKSKSG. The span at 259–279 shows a compositional bias: basic residues; that stretch reads LKTRNKKKASTKLIVRGRKAK.

This sequence belongs to the universal ribosomal protein uL2 family. In terms of assembly, part of the 50S ribosomal subunit. Forms a bridge to the 30S subunit in the 70S ribosome.

Its function is as follows. One of the primary rRNA binding proteins. Required for association of the 30S and 50S subunits to form the 70S ribosome, for tRNA binding and peptide bond formation. It has been suggested to have peptidyltransferase activity; this is somewhat controversial. Makes several contacts with the 16S rRNA in the 70S ribosome. The polypeptide is Large ribosomal subunit protein uL2 (Chlorobaculum tepidum (strain ATCC 49652 / DSM 12025 / NBRC 103806 / TLS) (Chlorobium tepidum)).